The following is a 150-amino-acid chain: Large ribosomal subunit protein bL9 (150 aa).

Belongs to the bacterial ribosomal protein bL9 family.

In terms of biological role, binds to the 23S rRNA. The polypeptide is Large ribosomal subunit protein bL9 (Lactococcus lactis subsp. cremoris (strain SK11)).